Here is a 135-residue protein sequence, read N- to C-terminus: uncharacterized protein (135 aa).

In terms of domain architecture, HotDog ACOT-type spans 8 to 123; that stretch reads PQGTIVLKTL…IFIYVAIDET (116 aa).

The protein belongs to the acyl coenzyme A hydrolase family.

This is an uncharacterized protein from Buchnera aphidicola subsp. Schizaphis graminum (strain Sg).